The sequence spans 320 residues: 1-aminocyclopropane-1-carboxylate oxidase 2 (320 aa).

The stretch at 111-143 (DEYRTAMKDFGKRLENLAEDLLDLLCENLGLEK) forms a coiled coil. The 101-residue stretch at 156–256 (PTFGTKVSNY…RMSVASFYNP (101 aa)) folds into the Fe2OG dioxygenase domain. Positions 180, 182, and 237 each coordinate Fe cation. Arg247 is a binding site for 2-oxoglutarate.

The protein belongs to the iron/ascorbate-dependent oxidoreductase family. The cofactor is Fe(2+). Requires Cu(2+) as cofactor. As to expression, expressed in vegetative tissues. Constitutively expressed in leaves and blades. In ethylene exposed etiolated seedlings, localized in cells at the outer side of the exaggerated hook in an ethylene-dependent manner and following an ethylene sensitive pattern. Also detected in the root tip when treated by ethylene.

The catalysed reaction is 1-aminocyclopropane-1-carboxylate + L-ascorbate + O2 = ethene + L-dehydroascorbate + hydrogen cyanide + CO2 + 2 H2O. The protein operates within alkene biosynthesis; ethylene biosynthesis via S-adenosyl-L-methionine; ethylene from S-adenosyl-L-methionine: step 2/2. Functionally, enzyme involved in the ethylene biosynthesis. Required to mediate the 1-aminocyclopropane-1-carboxylic acid (ACC)-mediated reversion of the ABA-induced inhibition of seed germination via endosperm rupture. May promote stem elongation by maximizing the extensibility cells, possibly by activating ethylene biosynthesis, in response to very-long-chain fatty acids (VLCFAs C20:0 to C30:0). This Arabidopsis thaliana (Mouse-ear cress) protein is 1-aminocyclopropane-1-carboxylate oxidase 2 (ACO2).